The following is a 134-amino-acid chain: ATP synthase epsilon chain (134 aa).

The protein belongs to the ATPase epsilon chain family. In terms of assembly, F-type ATPases have 2 components, CF(1) - the catalytic core - and CF(0) - the membrane proton channel. CF(1) has five subunits: alpha(3), beta(3), gamma(1), delta(1), epsilon(1). CF(0) has three main subunits: a, b and c.

It localises to the cell inner membrane. Its function is as follows. Produces ATP from ADP in the presence of a proton gradient across the membrane. This is ATP synthase epsilon chain from Sinorhizobium medicae (strain WSM419) (Ensifer medicae).